A 159-amino-acid chain; its full sequence is 6,7-dimethyl-8-ribityllumazine synthase (159 aa).

5-amino-6-(D-ribitylamino)uracil contacts are provided by residues Phe-22, 56–58, and 80–82; these read AFE and AVI. Residue 85-86 participates in (2S)-2-hydroxy-3-oxobutyl phosphate binding; sequence AT. Residue His-88 is the Proton donor of the active site. 5-amino-6-(D-ribitylamino)uracil is bound at residue Phe-113. (2S)-2-hydroxy-3-oxobutyl phosphate is bound at residue Arg-127.

It belongs to the DMRL synthase family.

The enzyme catalyses (2S)-2-hydroxy-3-oxobutyl phosphate + 5-amino-6-(D-ribitylamino)uracil = 6,7-dimethyl-8-(1-D-ribityl)lumazine + phosphate + 2 H2O + H(+). It functions in the pathway cofactor biosynthesis; riboflavin biosynthesis; riboflavin from 2-hydroxy-3-oxobutyl phosphate and 5-amino-6-(D-ribitylamino)uracil: step 1/2. Catalyzes the formation of 6,7-dimethyl-8-ribityllumazine by condensation of 5-amino-6-(D-ribitylamino)uracil with 3,4-dihydroxy-2-butanone 4-phosphate. This is the penultimate step in the biosynthesis of riboflavin. In Lactiplantibacillus plantarum (strain ATCC BAA-793 / NCIMB 8826 / WCFS1) (Lactobacillus plantarum), this protein is 6,7-dimethyl-8-ribityllumazine synthase.